We begin with the raw amino-acid sequence, 252 residues long: Imidazole glycerol phosphate synthase subunit HisF (252 aa).

Catalysis depends on residues Asp-11 and Asp-130.

This sequence belongs to the HisA/HisF family. In terms of assembly, heterodimer of HisH and HisF.

The protein resides in the cytoplasm. It carries out the reaction 5-[(5-phospho-1-deoxy-D-ribulos-1-ylimino)methylamino]-1-(5-phospho-beta-D-ribosyl)imidazole-4-carboxamide + L-glutamine = D-erythro-1-(imidazol-4-yl)glycerol 3-phosphate + 5-amino-1-(5-phospho-beta-D-ribosyl)imidazole-4-carboxamide + L-glutamate + H(+). It participates in amino-acid biosynthesis; L-histidine biosynthesis; L-histidine from 5-phospho-alpha-D-ribose 1-diphosphate: step 5/9. Functionally, IGPS catalyzes the conversion of PRFAR and glutamine to IGP, AICAR and glutamate. The HisF subunit catalyzes the cyclization activity that produces IGP and AICAR from PRFAR using the ammonia provided by the HisH subunit. This Dictyoglomus thermophilum (strain ATCC 35947 / DSM 3960 / H-6-12) protein is Imidazole glycerol phosphate synthase subunit HisF.